A 147-amino-acid polypeptide reads, in one-letter code: UPF0306 protein YhbP (147 aa).

The protein belongs to the UPF0306 family.

This is UPF0306 protein YhbP from Salmonella paratyphi A (strain AKU_12601).